Consider the following 962-residue polypeptide: Glycine dehydrogenase (decarboxylating) (962 aa).

N6-(pyridoxal phosphate)lysine is present on lysine 709.

It belongs to the GcvP family. In terms of assembly, the glycine cleavage system is composed of four proteins: P, T, L and H. Pyridoxal 5'-phosphate serves as cofactor.

The enzyme catalyses N(6)-[(R)-lipoyl]-L-lysyl-[glycine-cleavage complex H protein] + glycine + H(+) = N(6)-[(R)-S(8)-aminomethyldihydrolipoyl]-L-lysyl-[glycine-cleavage complex H protein] + CO2. In terms of biological role, the glycine cleavage system catalyzes the degradation of glycine. The P protein binds the alpha-amino group of glycine through its pyridoxal phosphate cofactor; CO(2) is released and the remaining methylamine moiety is then transferred to the lipoamide cofactor of the H protein. This Shewanella loihica (strain ATCC BAA-1088 / PV-4) protein is Glycine dehydrogenase (decarboxylating).